We begin with the raw amino-acid sequence, 182 residues long: MSSYSDFSQQLKTAGIALSAAELHGFLTGLICGGIHDQSWQPLLFQFTNENHAYPTALLQEVTQIQQHISKKLADIDGFDFELWLPENEDDVFTRADALSEWTNHFLLGLGLAQPKLDKEKGDIGEAIDDLHDICQLGYDESDDKEELSEALEEIIEYVRTLACLLFTHFQPQLPEQKPVLH.

It belongs to the UPF0149 family.

The chain is UPF0149 protein PM1723 from Pasteurella multocida (strain Pm70).